Reading from the N-terminus, the 251-residue chain is Probable transcriptional regulatory protein NFA_37020 (251 aa).

This sequence belongs to the TACO1 family.

It localises to the cytoplasm. This chain is Probable transcriptional regulatory protein NFA_37020, found in Nocardia farcinica (strain IFM 10152).